The chain runs to 181 residues: Translationally-controlled tumor protein homolog (181 aa).

Residues 1-181 (MLIFKDAFTD…VKEALIEEKQ (181 aa)) form the TCTP domain.

The protein belongs to the TCTP family.

It localises to the cytoplasm. Involved in calcium binding and microtubule stabilization. This Brugia malayi (Filarial nematode worm) protein is Translationally-controlled tumor protein homolog.